The following is a 741-amino-acid chain: Catalase-peroxidase (741 aa).

The segment at residues tryptophan 86 to tyrosine 208 is a cross-link (tryptophyl-tyrosyl-methioninium (Trp-Tyr) (with M-234)). Histidine 87 acts as the Proton acceptor in catalysis. Positions tyrosine 208–methionine 234 form a cross-link, tryptophyl-tyrosyl-methioninium (Tyr-Met) (with W-86). Histidine 249 serves as a coordination point for heme b.

This sequence belongs to the peroxidase family. Peroxidase/catalase subfamily. As to quaternary structure, homodimer or homotetramer. Heme b is required as a cofactor. In terms of processing, formation of the three residue Trp-Tyr-Met cross-link is important for the catalase, but not the peroxidase activity of the enzyme.

The enzyme catalyses H2O2 + AH2 = A + 2 H2O. It catalyses the reaction 2 H2O2 = O2 + 2 H2O. Functionally, bifunctional enzyme with both catalase and broad-spectrum peroxidase activity. Also displays NADH oxidase, INH lyase and isonicotinoyl-NAD synthase activities. In Archaeoglobus fulgidus (strain ATCC 49558 / DSM 4304 / JCM 9628 / NBRC 100126 / VC-16), this protein is Catalase-peroxidase.